Consider the following 192-residue polypeptide: Peptide deformylase 1 (192 aa).

Fe cation contacts are provided by C101 and H143. E144 is an active-site residue. H147 is a Fe cation binding site.

Belongs to the polypeptide deformylase family. It depends on Fe(2+) as a cofactor.

It carries out the reaction N-terminal N-formyl-L-methionyl-[peptide] + H2O = N-terminal L-methionyl-[peptide] + formate. Removes the formyl group from the N-terminal Met of newly synthesized proteins. Requires at least a dipeptide for an efficient rate of reaction. N-terminal L-methionine is a prerequisite for activity but the enzyme has broad specificity at other positions. The chain is Peptide deformylase 1 from Prochlorococcus marinus (strain MIT 9313).